The primary structure comprises 320 residues: NAD kinase (320 aa).

Aspartate 96 serves as the catalytic Proton acceptor. Residues 96–97 (DG), arginine 101, 170–171 (NE), aspartate 200, and 211–216 (TAYAFS) each bind NAD(+).

The protein belongs to the NAD kinase family. It depends on a divalent metal cation as a cofactor.

The protein resides in the cytoplasm. The catalysed reaction is NAD(+) + ATP = ADP + NADP(+) + H(+). Functionally, involved in the regulation of the intracellular balance of NAD and NADP, and is a key enzyme in the biosynthesis of NADP. Catalyzes specifically the phosphorylation on 2'-hydroxyl of the adenosine moiety of NAD to yield NADP. This Rhodococcus opacus (strain B4) protein is NAD kinase.